Here is a 503-residue protein sequence, read N- to C-terminus: MKAKIRILDMFSGRYTVLINEEDAKEAKLHPDDLVKIEAGKKAVYGSVALSNLVGKGEVGISRDVLDLHNFSEGETVSVIPAGTPESVRYIKKKMHGEKLRKVEIEAIVRDIVDRKLRDIEISSFVTALEINGLDMDEIAALTIAMAETGDMLDIDRKPIMDVHSIGGVPGNKTNILVVPIVAAAGLTIPKTSSRAITSAAGTADVVEVFADVSFSLDEIKRIVEKVGACLVWGGALNLAPADDITIKAERALSIDPTGLMLASIMSKKYAMGSQYVLIDIPTGKGVKVETVEEARSLARDFIELGKRLGQYVEVAITYGGQPIGHTVGPALEAREALSALMTGKGPGSLIEKATGLAGILLEMGGVAPAGTGKKMAKEILESGKAWEKMKEIIEAQGGDPNIKPEEIPIGDKTYTFTAATSGYVTAIDNRAITAIARAAGAPEDKGAGIELYVKVGEKVKEGDPLFTIHAEHEARLDQAIVLARRTEPIRIEGMVLQRIGNI.

Residues G168, 194–199, and T203 each bind AMP; that span reads SRAITS. D256 (proton donor) is an active-site residue. AMP-binding residues include S264 and K288.

The protein belongs to the thymidine/pyrimidine-nucleoside phosphorylase family. Type 2 subfamily. In terms of assembly, forms an exceptionally large macromolecular structure (&gt;40-mers) in solution.

The enzyme catalyses AMP + phosphate = alpha-D-ribose 1,5-bisphosphate + adenine. The catalysed reaction is CMP + phosphate = cytosine + alpha-D-ribose 1,5-bisphosphate. It carries out the reaction UMP + phosphate = alpha-D-ribose 1,5-bisphosphate + uracil. With respect to regulation, AMP phosphorolysis is allosterically regulated by the substrate AMP. Its function is as follows. Catalyzes the conversion of AMP and phosphate to adenine and ribose 1,5-bisphosphate (R15P). Exhibits phosphorylase activity toward CMP, dCMP and UMP in addition to AMP. Functions in an archaeal AMP degradation pathway, together with R15P isomerase and RubisCO. The chain is AMP phosphorylase from Thermococcus kodakarensis (strain ATCC BAA-918 / JCM 12380 / KOD1) (Pyrococcus kodakaraensis (strain KOD1)).